The sequence spans 444 residues: Presenilin sel-12 (444 aa).

Topologically, residues 1 to 45 (MPSTRRQQEGGGADAETHTVYGTNLITNRNSQEDENVVEEAELKY) are cytoplasmic. Residues 46 to 66 (GASHVIHLFVPVSLCMALVVF) form a helical membrane-spanning segment. The Lumenal segment spans residues 67–101 (TMNTITFYSQNNGRHLLYTPFVRETDSIVEKGLMS). Residues 102–122 (LGNALVMLCVVVLMTVLLIVF) traverse the membrane as a helical segment. Topologically, residues 123–130 (YKYKFYKL) are cytoplasmic. Residues 131-151 (IHGWLIVSSFLLLFLFTTIYV) traverse the membrane as a helical segment. Residues 152–163 (QEVLKSFDVSPS) lie on the Lumenal side of the membrane. Residues 164-184 (ALLVLFGLGNYGVLGMMCIHW) traverse the membrane as a helical segment. The Cytoplasmic segment spans residues 185–189 (KGPLR). Residues 190 to 210 (LQQFYLITMSALMALVFIKYL) form a helical membrane-spanning segment. At 211–212 (PE) the chain is on the lumenal side. Residues 213–233 (WTVWFVLFVISVWDLVAVLTP) traverse the membrane as a helical segment. D226 is a catalytic residue. The Cytoplasmic portion of the chain corresponds to 234–359 (KGPLRYLVET…RHEEEERGVK (126 aa)). The disordered stretch occupies residues 275–331 (TDPREPTSSDSNTSTAFPGEASCSSETPKRPKVKRIPQKVQIESNTTASTTQNSGVR). Composition is skewed to polar residues over residues 282-300 (SSDS…CSSE) and 315-329 (QIES…QNSG). The chain crosses the membrane as a helical span at residues 360 to 380 (LGLGDFIFYSVLLGKASSYFD). D364 is an active-site residue. Topologically, residues 381-384 (WNTT) are lumenal. Residues 385–405 (IACYVAILIGLCFTLVLLAVF) form a helical membrane-spanning segment. The Cytoplasmic segment spans residues 406–413 (KRALPALP). Positions 410-412 (PAL) match the PAL motif. An intramembrane region (helical) is located at residues 414–434 (ISIFSGLIFYFCTRWIITPFV). Residues 435 to 444 (TQVSQKCLLY) are Cytoplasmic-facing.

This sequence belongs to the peptidase A22A family. Homodimer. Component of the gamma-secretase complex, a complex probably composed of the presenilin homodimer (sel-12, hop-1 or spe-4), nicastrin (aph-2), aph-1 and pen-2. Interacts with sel-10. As to expression, expressed in most neurons.

It localises to the endoplasmic reticulum membrane. The protein localises to the golgi apparatus membrane. Functionally, probable catalytic subunit of the gamma-secretase complex, an endoprotease complex that catalyzes the intramembrane cleavage of integral membrane proteins such as Notch receptors (lin-12 or glp-1). Provides the major presenilin function compared to hop-1 and spe-4. Required cell-autonomously for correct neurite connectivity of the AIY cholinergic interneurons and their correct functioning in thermotaxis. Required for mesodermal patterning of muscle function. Promotes basement membrane gap formation during tissue remodeling. The chain is Presenilin sel-12 from Caenorhabditis elegans.